The primary structure comprises 767 residues: Photosystem I P700 chlorophyll a apoprotein A1 (767 aa).

The next 8 helical transmembrane spans lie at 72-95 (IFSA…FHGA), 158-181 (LMAL…FHYH), 197-221 (LNHH…HVSL), 305-323 (IAHH…GHMY), 364-387 (WHAQ…QHMY), 403-429 (IGLF…IAMV), 451-473 (AIIS…LYIH), and 548-566 (FMVH…LILL). [4Fe-4S] cluster-binding residues include cysteine 590 and cysteine 599. 2 consecutive transmembrane segments (helical) span residues 606-627 (HVFL…HFSW) and 681-703 (TSAY…MFLF). Position 692 (histidine 692) interacts with chlorophyll a'. Chlorophyll a-binding residues include methionine 700 and tyrosine 708. Tryptophan 709 is a binding site for phylloquinone. A helical membrane pass occupies residues 741-761 (AVGVAHYLLGGIATTWAFFHA).

This sequence belongs to the PsaA/PsaB family. In terms of assembly, the PsaA/B heterodimer binds the P700 chlorophyll special pair and subsequent electron acceptors. PSI consists of a core antenna complex that captures photons, and an electron transfer chain that converts photonic excitation into a charge separation. The cyanobacterial PSI reaction center is composed of one copy each of PsaA,B,C,D,E,F,I,J,K,L,M and X, and forms trimeric complexes. Requires PSI electron transfer chain: 5 chlorophyll a, 1 chlorophyll a', 2 phylloquinones and 3 4Fe-4S clusters. PSI core antenna: 90 chlorophyll a, 22 carotenoids, 3 phospholipids and 1 galactolipid. P700 is a chlorophyll a/chlorophyll a' dimer, A0 is one or more chlorophyll a, A1 is one or both phylloquinones and FX is a shared 4Fe-4S iron-sulfur center. as cofactor.

It is found in the cellular thylakoid membrane. It carries out the reaction reduced [plastocyanin] + hnu + oxidized [2Fe-2S]-[ferredoxin] = oxidized [plastocyanin] + reduced [2Fe-2S]-[ferredoxin]. Functionally, psaA and PsaB bind P700, the primary electron donor of photosystem I (PSI), as well as the electron acceptors A0, A1 and FX. PSI is a plastocyanin/cytochrome c6-ferredoxin oxidoreductase, converting photonic excitation into a charge separation, which transfers an electron from the donor P700 chlorophyll pair to the spectroscopically characterized acceptors A0, A1, FX, FA and FB in turn. Oxidized P700 is reduced on the lumenal side of the thylakoid membrane by plastocyanin or cytochrome c6. This Synechococcus sp. (strain CC9902) protein is Photosystem I P700 chlorophyll a apoprotein A1.